The sequence spans 412 residues: Putative competence-damage inducible protein (412 aa).

It belongs to the CinA family.

The chain is Putative competence-damage inducible protein from Bacillus cereus (strain G9842).